The following is a 261-amino-acid chain: Ice-binding protein (261 aa).

A signal peptide spans 1–20; that stretch reads MSLLSIITIGLAGLGGLVNG. Asn-185 carries N-linked (GlcNAc...) asparagine glycosylation.

Belongs to the ice-binding protein family. Homodimer. Dimerization is not required for the thermal hysteresis (TH) activity. Glycosylated. Glycosylation is not required for the thermal hysteresis (TH) activity. Glycosylation may increase stability and secretion of this protein.

The protein resides in the secreted. Functionally, confers freeze tolerance. Binds to the surface of ice crystals and inhibits their growth. Has low thermal hysteresis (TH) activity, which is the ability to lower the freezing point of an aqueous solution below its melting point. The TH activity of this protein is approximately 0.2 degrees Celsius at 50 uM and 0.3 degrees Celsius at 400 uM. The sequence is that of Ice-binding protein from Leucosporidium sp. (strain AY30) (Arctic yeast).